The sequence spans 220 residues: Orotidine 5'-phosphate decarboxylase (220 aa).

Substrate is bound by residues aspartate 12, lysine 34, 60 to 69, serine 117, 170 to 180, glycine 193, and arginine 194; these read DFKVADIPNT and PGVGAQGGKAS. The Proton donor role is filled by lysine 62.

Belongs to the OMP decarboxylase family. Type 1 subfamily. Homodimer.

The catalysed reaction is orotidine 5'-phosphate + H(+) = UMP + CO2. It participates in pyrimidine metabolism; UMP biosynthesis via de novo pathway; UMP from orotate: step 2/2. Its function is as follows. Catalyzes the decarboxylation of orotidine 5'-monophosphate (OMP) to uridine 5'-monophosphate (UMP). The sequence is that of Orotidine 5'-phosphate decarboxylase from Methanosarcina mazei (strain ATCC BAA-159 / DSM 3647 / Goe1 / Go1 / JCM 11833 / OCM 88) (Methanosarcina frisia).